We begin with the raw amino-acid sequence, 213 residues long: Probable elongation factor 1-beta/1-delta 1 (213 aa).

Belongs to the EF-1-beta/EF-1-delta family. As to quaternary structure, EF-1 is composed of 4 subunits: alpha, beta, delta, and gamma.

Its function is as follows. EF-1-beta and EF-1-delta stimulate the exchange of GDP bound to EF-1-alpha to GTP. This Caenorhabditis elegans protein is Probable elongation factor 1-beta/1-delta 1 (eef-1B.1).